A 419-amino-acid chain; its full sequence is MKNYKAIGKIGEGTFSEVMKMQSLRDGNYYACKQMKQRFESIEQVNNLREIQALRRLNPHPNILMLHEVVFDRKSGSLALICELMDMNIYELIRGRRYPLSEKKIMHYMYQLCKSLDHIHRNGIFHRDVKPENILIKQDVLKLGDFGSCRSVYSKQPYTEYISTRWYRAPECLLTDGFYTYKMDLWSAGCVFYEIASLQPLFPGVNELDQISKIHDVIGTPAQKILTKFKQSRAMNFDFPFKKGSGIPLLTTNLSPQCLSLLHAMVAYDPDERIAAHQALQHPYFQEQRKTEKRALGSHRKAGFPEHPVAPEPLSNSCQISKEGRKQKQSLKQEEDRPKRRGPAYVMELPKLKLSGVVRLSSYSSPTLQSVLGSGTNGRVPVLRPLKCIPASKKTDPQKDLKPAPQQCRLPTIVRKGGR.

One can recognise a Protein kinase domain in the interval Tyr4–Phe285. ATP-binding positions include Ile10–Val18 and Lys33. The active-site Proton acceptor is the Asp128. 2 disordered regions span residues Phe285–Ala344 and Pro390–Arg419. Composition is skewed to basic and acidic residues over residues Lys322–Pro338 and Lys393–Lys402.

This sequence belongs to the protein kinase superfamily. CMGC Ser/Thr protein kinase family. CDC2/CDKX subfamily. Requires Mg(2+) as cofactor. Autophosphorylated. As to expression, expressed in heart, brain, lung, kidney, and pancreas, and at very low levels in placenta, liver and skeletal muscle. Detected in retina.

It localises to the cytoplasm. Its subcellular location is the cell projection. It is found in the cilium. The protein resides in the nucleus. The enzyme catalyses L-seryl-[protein] + ATP = O-phospho-L-seryl-[protein] + ADP + H(+). It carries out the reaction L-threonyl-[protein] + ATP = O-phospho-L-threonyl-[protein] + ADP + H(+). With respect to regulation, phosphorylation appears to increase the enzymatic activity. In terms of biological role, able to phosphorylate several exogenous substrates and to undergo autophosphorylation. Negatively regulates cilium length in a cAMP and mTORC1 signaling-dependent manner. The polypeptide is MAPK/MAK/MRK overlapping kinase (MOK) (Homo sapiens (Human)).